The following is a 487-amino-acid chain: GTPase Der (487 aa).

2 EngA-type G domains span residues 3 to 166 and 201 to 374; these read PVIA…IAEL and VKLA…ESAT. Residues 9–16, 56–60, 118–121, 207–214, 254–258, and 319–322 contribute to the GTP site; these read GRPNVGKS, DTGGI, NKTD, DTAGV, and NKWD. One can recognise a KH-like domain in the interval 375–459; that stretch reads KRISTAMLRR…PIKIEFREGD (85 aa).

Belongs to the TRAFAC class TrmE-Era-EngA-EngB-Septin-like GTPase superfamily. EngA (Der) GTPase family. In terms of assembly, associates with the 50S ribosomal subunit.

Functionally, GTPase that plays an essential role in the late steps of ribosome biogenesis. This is GTPase Der from Pseudoalteromonas translucida (strain TAC 125).